The primary structure comprises 159 residues: Phosphodiesterase delta-like protein (159 aa).

It belongs to the PDE6D/unc-119 family.

The sequence is that of Phosphodiesterase delta-like protein (pdl-1) from Caenorhabditis elegans.